The primary structure comprises 626 residues: Probable metalloendopeptidase G1-type (626 aa).

His42 is a binding site for Zn(2+). Glu45 is a catalytic residue. Position 46 (His46) interacts with Zn(2+).

The protein belongs to the peptidase M44 family. Zn(2+) is required as a cofactor.

Its function is as follows. Seems to be involved in viral proteins maturation by cleavage at Ala-Gly-|-Xaa motifs. The protein is Probable metalloendopeptidase G1-type of Fowlpox virus (strain NVSL) (FPV).